Consider the following 164-residue polypeptide: R-phycoerythrin alpha chain (164 aa).

Residues Asn47, Lys81, Cys82, Arg84, His88, Arg137, Cys139, and Arg142 each contribute to the (2R,3E)-phycoerythrobilin site.

The protein belongs to the phycobiliprotein family. In terms of assembly, heterododecamer of 6 alpha and 6 beta chains. The basic functional unit of phycobiliproteins is a ring-shaped hexamer formed from two back-to-back trimers contacting via the alpha chain subunits. The trimers are composed of alpha/beta subunit heterodimers arranged around a three-fold axis of symmetry. The phycoerythrins also contain a gamma subunit which is located in the center of the hexamer. Contains two covalently linked phycoerythrobilin chromophores. In PubMed:8876649 the authors refer to the bilins as phycoerythrobilins. In the PDB entries, the bilins are named as phycocyanobilins although the modeled compounds correspond to phycoerythrobilins.

The protein localises to the plastid. The protein resides in the chloroplast thylakoid membrane. Light-harvesting photosynthetic tetrapyrrole chromophore-protein from the phycobiliprotein complex. The polypeptide is R-phycoerythrin alpha chain (cpeA) (Polysiphonia urceolata (Red alga)).